The primary structure comprises 231 residues: 7-cyano-7-deazaguanine synthase (231 aa).

8–18 (FSGGQDSTTCL) contributes to the ATP binding site. Zn(2+) contacts are provided by Cys-188, Cys-197, Cys-200, and Cys-203.

The protein belongs to the QueC family. It depends on Zn(2+) as a cofactor.

The catalysed reaction is 7-carboxy-7-deazaguanine + NH4(+) + ATP = 7-cyano-7-deazaguanine + ADP + phosphate + H2O + H(+). It participates in purine metabolism; 7-cyano-7-deazaguanine biosynthesis. In terms of biological role, catalyzes the ATP-dependent conversion of 7-carboxy-7-deazaguanine (CDG) to 7-cyano-7-deazaguanine (preQ(0)). The sequence is that of 7-cyano-7-deazaguanine synthase from Escherichia coli O157:H7.